Here is a 417-residue protein sequence, read N- to C-terminus: Serine hydroxymethyltransferase (417 aa).

Residues L121 and 125–127 (GHL) contribute to the (6S)-5,6,7,8-tetrahydrofolate site. An N6-(pyridoxal phosphate)lysine modification is found at K229. 355 to 357 (SPF) contacts (6S)-5,6,7,8-tetrahydrofolate.

Belongs to the SHMT family. Homodimer. Requires pyridoxal 5'-phosphate as cofactor.

The protein localises to the cytoplasm. The catalysed reaction is (6R)-5,10-methylene-5,6,7,8-tetrahydrofolate + glycine + H2O = (6S)-5,6,7,8-tetrahydrofolate + L-serine. It participates in one-carbon metabolism; tetrahydrofolate interconversion. The protein operates within amino-acid biosynthesis; glycine biosynthesis; glycine from L-serine: step 1/1. In terms of biological role, catalyzes the reversible interconversion of serine and glycine with tetrahydrofolate (THF) serving as the one-carbon carrier. This reaction serves as the major source of one-carbon groups required for the biosynthesis of purines, thymidylate, methionine, and other important biomolecules. Also exhibits THF-independent aldolase activity toward beta-hydroxyamino acids, producing glycine and aldehydes, via a retro-aldol mechanism. In Xanthomonas axonopodis pv. citri (strain 306), this protein is Serine hydroxymethyltransferase.